Reading from the N-terminus, the 256-residue chain is Imidazole glycerol phosphate synthase subunit HisF (256 aa).

Catalysis depends on residues Asp11 and Asp130.

This sequence belongs to the HisA/HisF family. As to quaternary structure, heterodimer of HisH and HisF.

It is found in the cytoplasm. The enzyme catalyses 5-[(5-phospho-1-deoxy-D-ribulos-1-ylimino)methylamino]-1-(5-phospho-beta-D-ribosyl)imidazole-4-carboxamide + L-glutamine = D-erythro-1-(imidazol-4-yl)glycerol 3-phosphate + 5-amino-1-(5-phospho-beta-D-ribosyl)imidazole-4-carboxamide + L-glutamate + H(+). It participates in amino-acid biosynthesis; L-histidine biosynthesis; L-histidine from 5-phospho-alpha-D-ribose 1-diphosphate: step 5/9. IGPS catalyzes the conversion of PRFAR and glutamine to IGP, AICAR and glutamate. The HisF subunit catalyzes the cyclization activity that produces IGP and AICAR from PRFAR using the ammonia provided by the HisH subunit. The protein is Imidazole glycerol phosphate synthase subunit HisF of Thioalkalivibrio sulfidiphilus (strain HL-EbGR7).